A 203-amino-acid chain; its full sequence is Small ribosomal subunit protein uS7 (203 aa).

The segment at 1–22 (MSESEAPEPDQPAGAEEATGAK) is disordered.

The protein belongs to the universal ribosomal protein uS7 family. As to quaternary structure, part of the 30S ribosomal subunit.

One of the primary rRNA binding proteins, it binds directly to 16S rRNA where it nucleates assembly of the head domain of the 30S subunit. Is located at the subunit interface close to the decoding center. The sequence is that of Small ribosomal subunit protein uS7 from Halococcus morrhuae (Micrococcus morrhuae).